Consider the following 361-residue polypeptide: Chorismate synthase (361 aa).

Residues Arg-48 and Arg-54 each contribute to the NADP(+) site. Residues 125–127 (RSS), 238–239 (NA), Gly-278, 293–297 (KPTSS), and Arg-319 each bind FMN.

The protein belongs to the chorismate synthase family. Homotetramer. The cofactor is FMNH2.

It catalyses the reaction 5-O-(1-carboxyvinyl)-3-phosphoshikimate = chorismate + phosphate. It participates in metabolic intermediate biosynthesis; chorismate biosynthesis; chorismate from D-erythrose 4-phosphate and phosphoenolpyruvate: step 7/7. Its function is as follows. Catalyzes the anti-1,4-elimination of the C-3 phosphate and the C-6 proR hydrogen from 5-enolpyruvylshikimate-3-phosphate (EPSP) to yield chorismate, which is the branch point compound that serves as the starting substrate for the three terminal pathways of aromatic amino acid biosynthesis. This reaction introduces a second double bond into the aromatic ring system. The chain is Chorismate synthase from Salmonella arizonae (strain ATCC BAA-731 / CDC346-86 / RSK2980).